A 593-amino-acid polypeptide reads, in one-letter code: Methionine--tRNA ligase (593 aa).

The 'HIGH' region motif lies at 7 to 17; that stretch reads PYANGPRHIGH. Zn(2+) is bound by residues cysteine 139, cysteine 142, cysteine 152, and cysteine 155. Residues 343-347 carry the 'KMSKS' region motif; that stretch reads KFSTS. ATP is bound at residue threonine 346.

It belongs to the class-I aminoacyl-tRNA synthetase family. MetG type 1 subfamily. In terms of assembly, monomer. It depends on Zn(2+) as a cofactor.

The protein resides in the cytoplasm. It carries out the reaction tRNA(Met) + L-methionine + ATP = L-methionyl-tRNA(Met) + AMP + diphosphate. In terms of biological role, is required not only for elongation of protein synthesis but also for the initiation of all mRNA translation through initiator tRNA(fMet) aminoacylation. This chain is Methionine--tRNA ligase, found in Saccharopolyspora erythraea (strain ATCC 11635 / DSM 40517 / JCM 4748 / NBRC 13426 / NCIMB 8594 / NRRL 2338).